The primary structure comprises 960 residues: Phosphoenolpyruvate carboxylase 3 (960 aa).

Ser8 is subject to Phosphoserine. Active-site residues include His167 and Lys597.

This sequence belongs to the PEPCase type 1 family. Homotetramer. Mg(2+) is required as a cofactor.

Its subcellular location is the cytoplasm. The enzyme catalyses oxaloacetate + phosphate = phosphoenolpyruvate + hydrogencarbonate. It functions in the pathway photosynthesis; C4 acid pathway. With respect to regulation, by light-reversible phosphorylation. Through the carboxylation of phosphoenolpyruvate (PEP) it forms oxaloacetate, a four-carbon dicarboxylic acid source for the tricarboxylic acid cycle. In Sorghum bicolor (Sorghum), this protein is Phosphoenolpyruvate carboxylase 3.